Consider the following 615-residue polypeptide: Extracellular metalloproteinase 1 (615 aa).

Residues 1–8 (SLPLHVLA) form the signal peptide. Residues 9–235 (HPQPSTSTSL…VHNVVDYVAH (227 aa)) constitute a propeptide that is removed on maturation. A glycan (N-linked (GlcNAc...) asparagine) is linked at Asn-276. His-419 is a Zn(2+) binding site. Glu-420 is a catalytic residue. His-423 is a Zn(2+) binding site. 3 N-linked (GlcNAc...) asparagine glycosylation sites follow: Asn-464, Asn-583, and Asn-612.

The protein belongs to the peptidase M36 family. Requires Zn(2+) as cofactor.

It localises to the secreted. Functionally, secreted metalloproteinase probably acting as a virulence factor. The chain is Extracellular metalloproteinase 1 (MEP1) from Trichophyton equinum (Horse ringworm fungus).